The chain runs to 421 residues: Histidine--tRNA ligase (421 aa).

It belongs to the class-II aminoacyl-tRNA synthetase family. As to quaternary structure, homodimer.

The protein localises to the cytoplasm. It carries out the reaction tRNA(His) + L-histidine + ATP = L-histidyl-tRNA(His) + AMP + diphosphate + H(+). The polypeptide is Histidine--tRNA ligase (Alkaliphilus oremlandii (strain OhILAs) (Clostridium oremlandii (strain OhILAs))).